The sequence spans 213 residues: Glutathione S-transferase DHAR2 (213 aa).

Cys-6 carries the S-glutathionyl cysteine modification. 2 residues coordinate glutathione: Lys-8 and Asp-19. Residues Lys-8 and Asp-19 each coordinate L-ascorbate. Residues 10–83 (AVGAPDVLGD…DVIVGLLEEK (74 aa)) enclose the GST N-terminal domain. Cys-20 carries the post-translational modification S-glutathionyl cysteine. Cys-20 serves as the catalytic Nucleophile. The Glutathione-binding signature appears at 20–25 (CPFSQR). Glutathione is bound by residues Lys-47, Val-60, Ser-73, His-160, and Trp-207. Residues 84 to 213 (YPEPSLKTPP…VAGWESKVNA (130 aa)) enclose the GST C-terminal domain. Residue Lys-210 participates in L-ascorbate binding.

The protein belongs to the GST superfamily. DHAR family. In terms of assembly, monomer. Post-translationally, spontaneous S-glutathionylation in the presence of oxidized glutathione (GSSG).

The protein localises to the cytoplasm. Its subcellular location is the cytosol. The catalysed reaction is RX + glutathione = an S-substituted glutathione + a halide anion + H(+). The enzyme catalyses L-dehydroascorbate + 2 glutathione = glutathione disulfide + L-ascorbate. In terms of biological role, displays a dual function. As a soluble protein, exhibits glutathione-dependent thiol transferase and dehydroascorbate (DHA) reductase activities. Exhibits glutathione-dependent thiol transferase and dehydroascorbate (DHA) reductase activities. Key component of the ascorbate recycling system. Involved in the redox homeostasis, especially in scavenging of ROS under oxidative stresses. Plays a role in ozone tolerance. This Arabidopsis thaliana (Mouse-ear cress) protein is Glutathione S-transferase DHAR2 (DHAR2).